A 353-amino-acid polypeptide reads, in one-letter code: Spermidine/putrescine import ATP-binding protein PotA (353 aa).

The ABC transporter domain maps to 7–237; it reads IRFERVTKEY…PINRFVADFI (231 aa). Residue 39–46 participates in ATP binding; sequence GPSGCGKT.

The protein belongs to the ABC transporter superfamily. Spermidine/putrescine importer (TC 3.A.1.11.1) family. The complex is composed of two ATP-binding proteins (PotA), two transmembrane proteins (PotB and PotC) and a solute-binding protein (PotD).

The protein resides in the cell membrane. The catalysed reaction is ATP + H2O + polyamine-[polyamine-binding protein]Side 1 = ADP + phosphate + polyamineSide 2 + [polyamine-binding protein]Side 1.. Functionally, part of the ABC transporter complex PotABCD involved in spermidine/putrescine import. Responsible for energy coupling to the transport system. The protein is Spermidine/putrescine import ATP-binding protein PotA of Geobacillus kaustophilus (strain HTA426).